Consider the following 231-residue polypeptide: Probable septum site-determining protein MinC (231 aa).

The disordered stretch occupies residues 100 to 125 (EGKEKSPRPAPAPQAPAQNTTPVTKT).

Belongs to the MinC family. As to quaternary structure, interacts with MinD and FtsZ.

In terms of biological role, cell division inhibitor that blocks the formation of polar Z ring septums. Rapidly oscillates between the poles of the cell to destabilize FtsZ filaments that have formed before they mature into polar Z rings. Prevents FtsZ polymerization. In Escherichia coli O81 (strain ED1a), this protein is Probable septum site-determining protein MinC.